The sequence spans 358 residues: Acid phosphatase (358 aa).

Residues 1-17 form the signal peptide; that stretch reads MKFSTIALPLLASAALA. N-linked (GlcNAc...) asparagine glycans are attached at residues asparagine 20, asparagine 27, and asparagine 32. Residues 21 to 41 are disordered; that stretch reads SSHSGTNATSHNSTVPNENSK. Mg(2+)-binding residues include aspartate 49, aspartate 50, and serine 81. Asparagine 92 and asparagine 145 each carry an N-linked (GlcNAc...) asparagine glycan. Residue asparagine 156 participates in Mg(2+) binding. Serine 189 is a catalytic residue. Asparagine 199 and asparagine 278 each carry an N-linked (GlcNAc...) asparagine glycan.

This sequence belongs to the SurE nucleotidase family. Requires Mg(2+) as cofactor.

It is found in the secreted. It carries out the reaction a phosphate monoester + H2O = an alcohol + phosphate. Functionally, probably serves to scavenge phosphorus for growing cells. In Yarrowia lipolytica (strain CLIB 122 / E 150) (Yeast), this protein is Acid phosphatase (PHO2).